A 198-amino-acid chain; its full sequence is UPF0301 protein BDI_1431 (198 aa).

It belongs to the UPF0301 (AlgH) family.

The chain is UPF0301 protein BDI_1431 from Parabacteroides distasonis (strain ATCC 8503 / DSM 20701 / CIP 104284 / JCM 5825 / NCTC 11152).